The following is a 576-amino-acid chain: Adenine deaminase 2 (576 aa).

Belongs to the metallo-dependent hydrolases superfamily. Adenine deaminase family. It depends on Mn(2+) as a cofactor.

The enzyme catalyses adenine + H2O + H(+) = hypoxanthine + NH4(+). The sequence is that of Adenine deaminase 2 from Desulfotalea psychrophila (strain LSv54 / DSM 12343).